Reading from the N-terminus, the 106-residue chain is Immunoglobulin lambda constant 3 (106 aa).

Positions 7–101 constitute an Ig-like domain; the sequence is PSVTLFPPSS…EGSTVEKTVA (95 aa). Cysteines 28 and 87 form a disulfide.

In terms of assembly, immunoglobulins are composed of two identical heavy chains and two identical light chains; disulfide-linked.

It is found in the secreted. The protein resides in the cell membrane. Constant region of immunoglobulin light chains. Immunoglobulins, also known as antibodies, are membrane-bound or secreted glycoproteins produced by B lymphocytes. In the recognition phase of humoral immunity, the membrane-bound immunoglobulins serve as receptors which, upon binding of a specific antigen, trigger the clonal expansion and differentiation of B lymphocytes into immunoglobulins-secreting plasma cells. Secreted immunoglobulins mediate the effector phase of humoral immunity, which results in the elimination of bound antigens. The antigen binding site is formed by the variable domain of one heavy chain, together with that of its associated light chain. Thus, each immunoglobulin has two antigen binding sites with remarkable affinity for a particular antigen. The variable domains are assembled by a process called V-(D)-J rearrangement and can then be subjected to somatic hypermutations which, after exposure to antigen and selection, allow affinity maturation for a particular antigen. This Homo sapiens (Human) protein is Immunoglobulin lambda constant 3.